A 402-amino-acid chain; its full sequence is Phosphoglycerate kinase (402 aa).

Residues 24–26 (DLN), arginine 39, 62–65 (HLGR), arginine 121, and arginine 161 contribute to the substrate site. ATP contacts are provided by residues lysine 211, glycine 299, glutamate 330, and 359-362 (GGDS).

Belongs to the phosphoglycerate kinase family. As to quaternary structure, monomer.

The protein localises to the cytoplasm. The catalysed reaction is (2R)-3-phosphoglycerate + ATP = (2R)-3-phospho-glyceroyl phosphate + ADP. Its pathway is carbohydrate degradation; glycolysis; pyruvate from D-glyceraldehyde 3-phosphate: step 2/5. This is Phosphoglycerate kinase from Corynebacterium urealyticum (strain ATCC 43042 / DSM 7109).